A 320-amino-acid polypeptide reads, in one-letter code: Myeloid-associated differentiation marker (320 aa).

2 MARVEL domains span residues 25-157 and 162-317; these read ALTQ…ARPG and YMAT…RLVF. 8 helical membrane passes run 35-55, 61-81, 95-115, 131-151, 165-185, 197-217, 233-253, and 292-312; these read LLQL…GAWT, WAMF…IVEL, FPIT…IIYP, AIAA…EVAW, TVPG…FAFI, LEWC…TILL, FLSG…VLWP, and LAVS…LVYS.

This sequence belongs to the MAL family.

The protein localises to the membrane. The polypeptide is Myeloid-associated differentiation marker (Myadm) (Mus musculus (Mouse)).